The primary structure comprises 87 residues: Large ribosomal subunit protein eL20 (87 aa).

The protein belongs to the eukaryotic ribosomal protein eL20 family. Part of the 50S ribosomal subunit. Binds 23S rRNA.

The chain is Large ribosomal subunit protein eL20 from Staphylothermus marinus (strain ATCC 43588 / DSM 3639 / JCM 9404 / F1).